Here is a 185-residue protein sequence, read N- to C-terminus: Elongation factor P (185 aa).

It belongs to the elongation factor P family.

Its subcellular location is the cytoplasm. The protein operates within protein biosynthesis; polypeptide chain elongation. Involved in peptide bond synthesis. Stimulates efficient translation and peptide-bond synthesis on native or reconstituted 70S ribosomes in vitro. Probably functions indirectly by altering the affinity of the ribosome for aminoacyl-tRNA, thus increasing their reactivity as acceptors for peptidyl transferase. This is Elongation factor P from Burkholderia mallei (strain NCTC 10247).